Here is a 98-residue protein sequence, read N- to C-terminus: UPF0235 protein Ping_3043 (98 aa).

It belongs to the UPF0235 family.

This is UPF0235 protein Ping_3043 from Psychromonas ingrahamii (strain DSM 17664 / CCUG 51855 / 37).